Here is a 239-residue protein sequence, read N- to C-terminus: Eukaryotic translation initiation factor 6 (239 aa).

This sequence belongs to the eIF-6 family. In terms of assembly, monomer. Associates with the 60S ribosomal subunit.

It is found in the cytoplasm. The protein resides in the nucleus. Its subcellular location is the nucleolus. Functionally, binds to the 60S ribosomal subunit and prevents its association with the 40S ribosomal subunit to form the 80S initiation complex in the cytoplasm. May also be involved in ribosome biogenesis. The chain is Eukaryotic translation initiation factor 6 from Entamoeba dispar (strain ATCC PRA-260 / SAW760).